We begin with the raw amino-acid sequence, 404 residues long: Endophilin-B2 (404 aa).

Position 1 is an N-acetylmethionine (methionine 1). Residues 1-27 (MDFNMKKLASDAGIFFTRAVQFTEEKF) are membrane-binding amphipathic helix. A Phosphoserine modification is found at serine 10. A BAR domain is found at 24–291 (EEKFGQAEKT…LGSSQGAIFP (268 aa)). Positions 209–239 (SASALWNDEVDKAEQELRAAQTEFDRQAEVT) form a coiled coil. An SH3 domain is found at 344–404 (SGTRKARVLY…VPVTYLELLS (61 aa)). Position 404 is a phosphoserine (serine 404).

The protein belongs to the endophilin family. In terms of assembly, homodimer, and heterodimer with SH3GLB1.

Its subcellular location is the cytoplasm. This Rattus norvegicus (Rat) protein is Endophilin-B2.